A 485-amino-acid polypeptide reads, in one-letter code: E3 ubiquitin-protein ligase TRIM68 (485 aa).

The RING-type zinc finger occupies 16–61; the sequence is CPICMTFLREPMSIDCGHSFCHSCLSGLWEIPGESQNWGYTCPLCR. The B box-type zinc-finger motif lies at 93–134; sequence LKGDLCERHGEKLKMFCKEDVLIMCEACSQSPEHEAHSVVPM. Residues cysteine 98, histidine 101, cysteine 120, and histidine 126 each contribute to the Zn(2+) site. Residues 207–239 are a coiled coil; it reads AEVAAALASLQREAAETMQKLELNHSELIQQSQ. The B30.2/SPRY domain maps to 285–481; that stretch reads LKTDCRVLGL…NTAPLAICSL (197 aa).

This sequence belongs to the TRIM/RBCC family. Interacts with AR/androgen receptor (via ligand-binding domain). Interacts with KAT5/TIP60. Auto-ubiquitinated. As to expression, widely expressed. Expressed at high levels in prostate cancer cell lines. Up-regulation could be restricted to androgen-dependent cells.

The protein resides in the cytoplasm. The protein localises to the perinuclear region. It is found in the nucleus. The catalysed reaction is S-ubiquitinyl-[E2 ubiquitin-conjugating enzyme]-L-cysteine + [acceptor protein]-L-lysine = [E2 ubiquitin-conjugating enzyme]-L-cysteine + N(6)-ubiquitinyl-[acceptor protein]-L-lysine.. Its pathway is protein modification; protein ubiquitination. Functionally, functions as a ubiquitin E3 ligase. Acts as a coactivator of androgen receptor (AR) depending on its ubiquitin ligase activity. The polypeptide is E3 ubiquitin-protein ligase TRIM68 (TRIM68) (Homo sapiens (Human)).